Here is a 322-residue protein sequence, read N- to C-terminus: N-acetyl-gamma-glutamyl-phosphate reductase (322 aa).

The active site involves cysteine 132.

It belongs to the NAGSA dehydrogenase family. Type 1 subfamily.

The protein resides in the cytoplasm. It catalyses the reaction N-acetyl-L-glutamate 5-semialdehyde + phosphate + NADP(+) = N-acetyl-L-glutamyl 5-phosphate + NADPH + H(+). Its pathway is amino-acid biosynthesis; L-arginine biosynthesis; N(2)-acetyl-L-ornithine from L-glutamate: step 3/4. Catalyzes the NADPH-dependent reduction of N-acetyl-5-glutamyl phosphate to yield N-acetyl-L-glutamate 5-semialdehyde. In Bacteroides thetaiotaomicron (strain ATCC 29148 / DSM 2079 / JCM 5827 / CCUG 10774 / NCTC 10582 / VPI-5482 / E50), this protein is N-acetyl-gamma-glutamyl-phosphate reductase.